Here is a 432-residue protein sequence, read N- to C-terminus: Adenylosuccinate synthetase (432 aa).

Residues Gly-13–Lys-19 and Gly-41–Thr-43 each bind GTP. The active-site Proton acceptor is Asp-14. Residues Asp-14 and Gly-41 each contribute to the Mg(2+) site. IMP is bound by residues Asp-14 to Lys-17, Asn-39 to His-42, Thr-131, Arg-145, Gln-226, Thr-241, and Arg-305. The Proton donor role is filled by His-42. Ser-301 to Arg-307 provides a ligand contact to substrate. Residues Arg-307, Lys-333–Asp-335, and Ser-416–Gly-418 each bind GTP.

The protein belongs to the adenylosuccinate synthetase family. As to quaternary structure, homodimer. Mg(2+) is required as a cofactor.

The protein localises to the cytoplasm. The enzyme catalyses IMP + L-aspartate + GTP = N(6)-(1,2-dicarboxyethyl)-AMP + GDP + phosphate + 2 H(+). It functions in the pathway purine metabolism; AMP biosynthesis via de novo pathway; AMP from IMP: step 1/2. Its function is as follows. Plays an important role in the de novo pathway of purine nucleotide biosynthesis. Catalyzes the first committed step in the biosynthesis of AMP from IMP. In Neisseria meningitidis serogroup C (strain 053442), this protein is Adenylosuccinate synthetase.